Reading from the N-terminus, the 537-residue chain is Leucine-rich repeat LGI family member 4 (537 aa).

Residues 1 to 19 form the signal peptide; it reads MGGAGILLLLLAGAGVVVA. 4 LRR repeats span residues 53-74, 77-98, 101-122, and 125-146; these read TLLS…SFLR, SLHL…AFAG, HLQY…ALRG, and SLTH…LFRG. Residues 158-208 form the LRRCT domain; it reads NPFQCDCRVLWLLQWMPTVNASVGTGACAGPASLSHMQLHHLDPKTFKCRA. N-linked (GlcNAc...) asparagine glycosylation is present at Asn177. 7 EAR repeats span residues 210–252, 256–298, 302–349, 351–394, 396–439, 441–483, and 487–532; these read ELSW…SWDY, RFRP…ARPS, RLAP…CRDG, GFYP…HWTG, RFER…RWDG, MFRL…RLEP, and LLEP…QHHE.

Can bind to ADAM11, ADAM22 and ADAM23. As to expression, widely expressed, with highest expression in brain.

The protein localises to the secreted. Its function is as follows. Component of Schwann cell signaling pathway(s) that controls axon segregation and myelin formation. The sequence is that of Leucine-rich repeat LGI family member 4 (LGI4) from Homo sapiens (Human).